The sequence spans 363 residues: Adenosine kinase (363 aa).

Residues Ala185, Ile188, and Ala191 each coordinate Mg(2+). Residue Asp318 is part of the active site.

The protein belongs to the carbohydrate kinase PfkB family. Mg(2+) serves as cofactor.

It carries out the reaction adenosine + ATP = AMP + ADP + H(+). It functions in the pathway purine metabolism; AMP biosynthesis via salvage pathway; AMP from adenosine: step 1/1. Functionally, ATP-dependent phosphorylation of adenosine and other related nucleoside analogs to monophosphate derivatives. It is a key purine metabolic enzyme in the opportunistic parasitic protozoan toxoplasma gondii as it cannot synthesize purines de novo. The sequence is that of Adenosine kinase (AK) from Toxoplasma gondii.